The chain runs to 217 residues: Tegument protein BKRF4 (217 aa).

Residues 1–217 (MAMFLKSRGV…GNNNYNWPWL (217 aa)) form a disordered region. A compositionally biased stretch (polar residues) spans 32 to 42 (YTLGSQASQSI). Positions 43–79 (QEEDVSDTDESDYSDEDEEIDLEEEYPSDEDPSEGSD) are enriched in acidic residues. The tract at residues 63–64 (DL) is interaction with host histones H3/H4. The tract at residues 81–84 (DPSW) is interaction with host H2A/H2B. Over residues 89–102 (SDESDYSESDEDEA) the composition is skewed to acidic residues. Residues 106–132 (SQASRSSRVSPSTQQSSGLTPTPSFSR) are compositionally biased toward low complexity. Residues 136-145 (RAPPRPPAPA) are compositionally biased toward pro residues. Residues 208–217 (GNNNYNWPWL) show a composition bias toward polar residues.

Belongs to the lymphocryptovirus BKRF4 family. In terms of assembly, forms a complex with the host H3/H4 dimer and histone chaperone ASF1. Also forms a complex with host H2A/H2B dimer. Interacts (via C-terminus) with BGLF2; this interaction is important for infectious virion production.

The protein localises to the virion tegument. It localises to the host nucleus. Its subcellular location is the host cytoplasm. It is found in the host perinuclear region. In terms of biological role, histone-binding protein that binds to histones H2A/H2B, H3/H4 and cellular chromatin to overcome the host DNA damage response triggered by the viral genome ends. Interferes with histone ubiquitination and recruitment of repair proteins. This chain is Tegument protein BKRF4, found in Epstein-Barr virus (strain AG876) (HHV-4).